The primary structure comprises 22 residues: Defensin D1 (22 aa).

This sequence belongs to the DEFL family. Group II subfamily.

Its function is as follows. Antimicrobial peptide. Active against Gram-positive and Gram-negative bacterial pathogens. The chain is Defensin D1 from Spinacia oleracea (Spinach).